The sequence spans 238 residues: Probable transcriptional regulatory protein SZO_02930 (238 aa).

This sequence belongs to the TACO1 family. YeeN subfamily.

The protein resides in the cytoplasm. The polypeptide is Probable transcriptional regulatory protein SZO_02930 (Streptococcus equi subsp. zooepidemicus (strain H70)).